Consider the following 445-residue polypeptide: Tryptophan 5-hydroxylase 1 (445 aa).

An ACT domain is found at 19–94; sequence AIIFSLKNEV…SIVSMNPTEH (76 aa). At Ser-58 the chain carries Phosphoserine; by PKA. L-tryptophan is bound by residues Tyr-236, Arg-258, and Thr-266. Fe cation contacts are provided by His-273, His-278, and Glu-318. Residues Ser-337 and Ile-367 each coordinate L-tryptophan.

Belongs to the biopterin-dependent aromatic amino acid hydroxylase family. Homotetramer. Requires Fe(2+) as cofactor.

It carries out the reaction (6R)-L-erythro-5,6,7,8-tetrahydrobiopterin + L-tryptophan + O2 = 5-hydroxy-L-tryptophan + (4aS,6R)-4a-hydroxy-L-erythro-5,6,7,8-tetrahydrobiopterin. It functions in the pathway aromatic compound metabolism; serotonin biosynthesis; serotonin from L-tryptophan: step 1/2. Functionally, oxidizes L-tryptophan to 5-hydroxy-l-tryptophan in the rate-determining step of serotonin biosynthesis. This chain is Tryptophan 5-hydroxylase 1 (TPH1), found in Gallus gallus (Chicken).